A 134-amino-acid chain; its full sequence is Small ribosomal subunit protein uS11 (134 aa).

This sequence belongs to the universal ribosomal protein uS11 family. Part of the 30S ribosomal subunit. Interacts with proteins S7 and S18. Binds to IF-3.

Its function is as follows. Located on the platform of the 30S subunit, it bridges several disparate RNA helices of the 16S rRNA. Forms part of the Shine-Dalgarno cleft in the 70S ribosome. This is Small ribosomal subunit protein uS11 from Leptothrix cholodnii (strain ATCC 51168 / LMG 8142 / SP-6) (Leptothrix discophora (strain SP-6)).